We begin with the raw amino-acid sequence, 374 residues long: MILKEGEVVFEVPDKLTVTKKDEVFYNPRMKTCRDISIAVIQAFLNLYHKRDKFYIADALAGSGIRGLRYAKELEFNGELKVFLNDINPKAYEKIINNAKLNEIENIDVFNEDANTFLSKHFRFFNVVDIDPFGSPAPYVEQAIRALVTRNGLLCLTATDTAALCGRSKKSCLRKYLAYPLFGRDCHEFALRVLVGYVMRMATKYELALKPVFCHATDHYVRVYLVTDRGAKRADKVFEMLGYVKDVNGIKIIKKFEEGYEKGFAGPLYIGNLYDKALVEEALKIAEKREFSERVLKILNAIKGESAINQVGCYDTHQIGKMLKISVPPMQDIINKLKEMGFNAVVTHYNPKGIKTDATLKNVIEAIYQCTKIR.

The 367-residue stretch at 1-367 folds into the Trm1 methyltransferase domain; that stretch reads MILKEGEVVF…ATLKNVIEAI (367 aa). Arg34, Arg66, Asp86, Asp113, and Ala114 together coordinate S-adenosyl-L-methionine.

It belongs to the class I-like SAM-binding methyltransferase superfamily. Trm1 family.

It carries out the reaction guanosine(26) in tRNA + 2 S-adenosyl-L-methionine = N(2)-dimethylguanosine(26) in tRNA + 2 S-adenosyl-L-homocysteine + 2 H(+). Functionally, dimethylates a single guanine residue at position 26 of a number of tRNAs using S-adenosyl-L-methionine as donor of the methyl groups. This Methanocaldococcus jannaschii (strain ATCC 43067 / DSM 2661 / JAL-1 / JCM 10045 / NBRC 100440) (Methanococcus jannaschii) protein is tRNA (guanine(26)-N(2))-dimethyltransferase.